A 297-amino-acid polypeptide reads, in one-letter code: tRNA dimethylallyltransferase (297 aa).

10-17 (APTGAGKT) contacts ATP. Residue 12–17 (TGAGKT) participates in substrate binding. Residues 34–37 (DSRQ) form an interaction with substrate tRNA region.

This sequence belongs to the IPP transferase family. In terms of assembly, monomer. It depends on Mg(2+) as a cofactor.

The catalysed reaction is adenosine(37) in tRNA + dimethylallyl diphosphate = N(6)-dimethylallyladenosine(37) in tRNA + diphosphate. Functionally, catalyzes the transfer of a dimethylallyl group onto the adenine at position 37 in tRNAs that read codons beginning with uridine, leading to the formation of N6-(dimethylallyl)adenosine (i(6)A). This Leptospira interrogans serogroup Icterohaemorrhagiae serovar Lai (strain 56601) protein is tRNA dimethylallyltransferase.